Reading from the N-terminus, the 55-residue chain is Sec-independent protein translocase protein TatA (55 aa).

The helical transmembrane segment at 1 to 21 (MFGELGVPEVLFILGIALLIF) threads the bilayer.

Belongs to the TatA/E family. Forms a complex with TatC.

It is found in the cell inner membrane. Functionally, part of the twin-arginine translocation (Tat) system that transports large folded proteins containing a characteristic twin-arginine motif in their signal peptide across membranes. TatA could form the protein-conducting channel of the Tat system. The protein is Sec-independent protein translocase protein TatA of Koribacter versatilis (strain Ellin345).